The following is a 287-amino-acid chain: Beta-lactamase GES-2 (287 aa).

Residues 1–18 (MRFIHALLLAGIAHSAYA) form the signal peptide. An intrachain disulfide couples Cys-63 to Cys-233. The Nucleophile; acyl-ester intermediate role is filled by Ser-64. Lys-67, Ser-125, and Glu-161 together coordinate a beta-lactam.

Belongs to the class-A beta-lactamase family.

It carries out the reaction a beta-lactam + H2O = a substituted beta-amino acid. Inhibited by the beta-lactamase-blocking agents clavulanic acid, sulbactam and tazobactam. Functionally, extended-spectrum beta-lactamase (ESBL) which confers resistance to penicillins, as well as first, third and fourth-generation cephalosporins. Has modest carbapenem-hydrolyzing activity. Has cefotaxime-hydrolyzing activity. The protein is Beta-lactamase GES-2 of Pseudomonas aeruginosa.